The sequence spans 229 residues: Glutathione S-transferase 1 (229 aa).

In terms of domain architecture, GST N-terminal spans Ala2 to Arg86. One can recognise a GST C-terminal domain in the interval Asp93–Asn229.

Belongs to the GST superfamily.

The catalysed reaction is RX + glutathione = an S-substituted glutathione + a halide anion + H(+). Involved in the oxidative stress response and detoxification. The protein is Glutathione S-transferase 1 (gst1) of Schizosaccharomyces pombe (strain 972 / ATCC 24843) (Fission yeast).